The chain runs to 190 residues: Threonylcarbamoyl-AMP synthase (190 aa).

The YrdC-like domain occupies 7-190 (TGSIAAAVDL…ALTGELFRQG (184 aa)).

It belongs to the SUA5 family. TsaC subfamily.

Its subcellular location is the cytoplasm. The enzyme catalyses L-threonine + hydrogencarbonate + ATP = L-threonylcarbamoyladenylate + diphosphate + H2O. Functionally, required for the formation of a threonylcarbamoyl group on adenosine at position 37 (t(6)A37) in tRNAs that read codons beginning with adenine. Catalyzes the conversion of L-threonine, HCO(3)(-)/CO(2) and ATP to give threonylcarbamoyl-AMP (TC-AMP) as the acyladenylate intermediate, with the release of diphosphate. The sequence is that of Threonylcarbamoyl-AMP synthase from Salmonella choleraesuis (strain SC-B67).